The following is a 356-amino-acid chain: Nicotinate-nucleotide--dimethylbenzimidazole phosphoribosyltransferase (356 aa).

The active-site Proton acceptor is the Glu317.

This sequence belongs to the CobT family. Homodimer.

The enzyme catalyses 5,6-dimethylbenzimidazole + nicotinate beta-D-ribonucleotide = alpha-ribazole 5'-phosphate + nicotinate + H(+). Its pathway is nucleoside biosynthesis; alpha-ribazole biosynthesis; alpha-ribazole from 5,6-dimethylbenzimidazole: step 1/2. Catalyzes the synthesis of alpha-ribazole-5'-phosphate from nicotinate mononucleotide (NAMN) and 5,6-dimethylbenzimidazole (DMB). The chain is Nicotinate-nucleotide--dimethylbenzimidazole phosphoribosyltransferase from Salmonella paratyphi A (strain AKU_12601).